We begin with the raw amino-acid sequence, 120 residues long: Chaperonin GroEL (120 aa).

23-27 (DGTTT) serves as a coordination point for ATP.

This sequence belongs to the chaperonin (HSP60) family. Forms a cylinder of 14 subunits composed of two heptameric rings stacked back-to-back. Interacts with the co-chaperonin GroES.

The protein resides in the cytoplasm. The enzyme catalyses ATP + H2O + a folded polypeptide = ADP + phosphate + an unfolded polypeptide.. Together with its co-chaperonin GroES, plays an essential role in assisting protein folding. The GroEL-GroES system forms a nano-cage that allows encapsulation of the non-native substrate proteins and provides a physical environment optimized to promote and accelerate protein folding. The polypeptide is Chaperonin GroEL (Mycobacterium kansasii).